We begin with the raw amino-acid sequence, 430 residues long: Delta(14)-sterol reductase (430 aa).

Helical transmembrane passes span 12–32, 67–87, 109–129, 230–250, 267–287, and 290–310; these read IGTG…HFLI, LAVA…PAEI, FLVF…TWWF, FVSD…VDAL, LGVM…CLQA, and LASF…AVQF. NADP(+)-binding positions include Lys323, Arg327, Leu350, Trp355, and 362–363; that span reads NY. The next 2 helical transmembrane spans lie at 349 to 369 and 376 to 396; these read LLIS…DWIM and TTGF…ILLL. NADP(+) is bound by residues Asp402, 406–410, and Tyr417; that span reads CREKY.

It belongs to the ERG4/ERG24 family.

It is found in the membrane. It catalyses the reaction 4,4-dimethyl-5alpha-cholesta-8,24-dien-3beta-ol + NADP(+) = 4,4-dimethyl-5alpha-cholesta-8,14,24-trien-3beta-ol + NADPH + H(+). It functions in the pathway steroid biosynthesis; zymosterol biosynthesis; zymosterol from lanosterol: step 2/6. In terms of biological role, reduces the C14=C15 double bond of 4,4-dimethyl-cholesta-8,14,24-trienol to produce 4,4-dimethyl-cholesta-8,24-dienol. The polypeptide is Delta(14)-sterol reductase (ERG3) (Ascobolus immersus).